Reading from the N-terminus, the 241-residue chain is Small ribosomal subunit protein uS3 (241 aa).

Positions 39–107 constitute a KH type-2 domain; that stretch reads MRKFVMDELK…ETHLNIVEVR (69 aa). The disordered stretch occupies residues 214 to 241; it reads ASERRALEGDAQGPASRDRDRDRRRDNA. The segment covering 229-241 has biased composition (basic and acidic residues); the sequence is SRDRDRDRRRDNA.

Belongs to the universal ribosomal protein uS3 family. As to quaternary structure, part of the 30S ribosomal subunit. Forms a tight complex with proteins S10 and S14.

Functionally, binds the lower part of the 30S subunit head. Binds mRNA in the 70S ribosome, positioning it for translation. The sequence is that of Small ribosomal subunit protein uS3 from Rhizobium rhizogenes (strain K84 / ATCC BAA-868) (Agrobacterium radiobacter).